The chain runs to 717 residues: Ubinuclein-2 (717 aa).

3 disordered regions span residues 114-136, 166-308, and 620-717; these read KDGSDGEELDGAPDDDDYDTEDS, LERI…SAKS, and ADSS…NLPS. A compositionally biased stretch (acidic residues) spans 118 to 136; sequence DGEELDGAPDDDDYDTEDS. Composition is skewed to polar residues over residues 214-246 and 285-308; these read QSASPGPSSKKISNDSKTVQDSFSPLKAQNGND and SSKSVHEQSNSPPGKSRPNVSAKS. Positions 623–632 are enriched in basic and acidic residues; that stretch reads SFERSKQQHE. The short motif at 634–641 is the Nuclear localization signal element; that stretch reads LKRTSSLS. Positions 653 to 665 are enriched in basic and acidic residues; it reads KTEPALEETHLPA. A compositionally biased stretch (basic residues) spans 675–705; that stretch reads RQTHLKSKTHKQVQVHPQSKAHKQAQVHPKA. Polar residues predominate over residues 706-717; that stretch reads KTQTPPDLNLPS.

This sequence belongs to the ubinuclein family. As to quaternary structure, component of the HIRA complex made of UBN1, UBN2, ASF1A, CABIN1 and HIRA. Interacts with HIRA.

It localises to the nucleus. Its subcellular location is the nucleolus. May be required for replication-independent chromatin assembly. In Arabidopsis thaliana (Mouse-ear cress), this protein is Ubinuclein-2.